The chain runs to 445 residues: Phosphoglucosamine mutase (445 aa).

Ser-99 serves as the catalytic Phosphoserine intermediate. The Mg(2+) site is built by Ser-99, Asp-242, Asp-244, and Asp-246. Phosphoserine is present on Ser-99.

It belongs to the phosphohexose mutase family. It depends on Mg(2+) as a cofactor. Post-translationally, activated by phosphorylation.

It catalyses the reaction alpha-D-glucosamine 1-phosphate = D-glucosamine 6-phosphate. Functionally, catalyzes the conversion of glucosamine-6-phosphate to glucosamine-1-phosphate. The polypeptide is Phosphoglucosamine mutase (Helicobacter pylori (strain G27)).